Reading from the N-terminus, the 348-residue chain is tRNA N6-adenosine threonylcarbamoyltransferase (348 aa).

H115 and H119 together coordinate Fe cation. Substrate is bound by residues 138 to 142 (LVSGG), D171, G184, and N276. D304 serves as a coordination point for Fe cation.

Belongs to the KAE1 / TsaD family. It depends on Fe(2+) as a cofactor.

It localises to the cytoplasm. The catalysed reaction is L-threonylcarbamoyladenylate + adenosine(37) in tRNA = N(6)-L-threonylcarbamoyladenosine(37) in tRNA + AMP + H(+). In terms of biological role, required for the formation of a threonylcarbamoyl group on adenosine at position 37 (t(6)A37) in tRNAs that read codons beginning with adenine. Is involved in the transfer of the threonylcarbamoyl moiety of threonylcarbamoyl-AMP (TC-AMP) to the N6 group of A37, together with TsaE and TsaB. TsaD likely plays a direct catalytic role in this reaction. The chain is tRNA N6-adenosine threonylcarbamoyltransferase from Xylella fastidiosa (strain M23).